Reading from the N-terminus, the 239-residue chain is Probable transcriptional regulatory protein CD630_07950 (239 aa).

Belongs to the TACO1 family.

Its subcellular location is the cytoplasm. This Clostridioides difficile (strain 630) (Peptoclostridium difficile) protein is Probable transcriptional regulatory protein CD630_07950.